A 451-amino-acid chain; its full sequence is Chromosomal replication initiator protein DnaA (451 aa).

Residues 1–77 (MTENEQIFWN…EVYNAQISVD (77 aa)) form a domain I, interacts with DnaA modulators region. Positions 77 to 110 (DYVFEEDLMIEQNQTKINQKPKQQALNSLPTVTS) are domain II. A domain III, AAA+ region region spans residues 111–329 (DLNPKYSFEN…GALKDISLVA (219 aa)). ATP contacts are provided by Gly155, Gly157, Lys158, and Thr159. Positions 330 to 451 (NFKQIDTITV…EIETIKNKIK (122 aa)) are domain IV, binds dsDNA.

It belongs to the DnaA family. In terms of assembly, oligomerizes as a right-handed, spiral filament on DNA at oriC.

The protein localises to the cytoplasm. In terms of biological role, plays an essential role in the initiation and regulation of chromosomal replication. ATP-DnaA binds to the origin of replication (oriC) to initiate formation of the DNA replication initiation complex once per cell cycle. Binds the DnaA box (a 9 base pair repeat at the origin) and separates the double-stranded (ds)DNA. Forms a right-handed helical filament on oriC DNA; dsDNA binds to the exterior of the filament while single-stranded (ss)DNA is stabiized in the filament's interior. The ATP-DnaA-oriC complex binds and stabilizes one strand of the AT-rich DNA unwinding element (DUE), permitting loading of DNA polymerase. After initiation quickly degrades to an ADP-DnaA complex that is not apt for DNA replication. Binds acidic phospholipids. This chain is Chromosomal replication initiator protein DnaA, found in Streptococcus pyogenes serotype M4 (strain MGAS10750).